The primary structure comprises 146 residues: Large ribosomal subunit protein uL22 (146 aa).

It belongs to the universal ribosomal protein uL22 family. In terms of assembly, part of the 50S ribosomal subunit.

This protein binds specifically to 23S rRNA; its binding is stimulated by other ribosomal proteins, e.g. L4, L17, and L20. It is important during the early stages of 50S assembly. It makes multiple contacts with different domains of the 23S rRNA in the assembled 50S subunit and ribosome. In terms of biological role, the globular domain of the protein is located near the polypeptide exit tunnel on the outside of the subunit, while an extended beta-hairpin is found that lines the wall of the exit tunnel in the center of the 70S ribosome. This Nocardioides sp. (strain ATCC BAA-499 / JS614) protein is Large ribosomal subunit protein uL22.